The primary structure comprises 597 residues: Integrator complex subunit 11 (597 aa).

Zn(2+) contacts are provided by His-68, His-70, Asp-72, His-73, His-157, and Asp-178. The HXHXDH motif motif lies at 68 to 73 (HFHLDH). The active site involves Glu-203. His-414 is a Zn(2+) binding site. Lys-462 provides a ligand contact to 1D-myo-inositol hexakisphosphate.

Belongs to the metallo-beta-lactamase superfamily. RNA-metabolizing metallo-beta-lactamase-like family. INTS11 subfamily. As to quaternary structure, belongs to the multiprotein complex Integrator, at least composed of IntS1, IntS2, IntS3, IntS4, omd/IntS5, IntS6, defl/IntS7, IntS8, IntS9, IntS10, IntS11, IntS12, asun/IntS13, IntS14 and IntS15. The core complex associates with protein phosphatase 2A subunits mts/PP2A and Pp2A-29B, to form the Integrator-PP2A (INTAC) complex. IntS11 is part of the RNA endonuclease subcomplex, composed of IntS4, IntS9, IntS11 and inositol hexakisphosphate (InsP6). Interacts with Brat1; interaction is required for the assembly of the RNA endonuclease subcomplex and inhibits the endonuclease activity of IntS11 before formation of mature integrator complex. Zn(2+) serves as cofactor. As to expression, expressed in neurons and glia of the larval and adult brain.

The protein resides in the nucleus. It localises to the cytoplasm. Its subcellular location is the cytosol. With respect to regulation, the RNA endonuclease activity is inhibited by Brat1 that forms hyrogen bond and hydrophobic interactions with the active site. In terms of biological role, RNA endonuclease component of the integrator complex, a multiprotein complex that terminates RNA polymerase II (Pol II) transcription in the promoter-proximal region of genes. The integrator complex provides a quality checkpoint during transcription elongation by driving premature transcription termination of transcripts that are unfavorably configured for transcriptional elongation: the complex terminates transcription by (1) catalyzing dephosphorylation of the C-terminal domain (CTD) of Pol II subunit Polr2A/Rbp1 and Spt5, and (2) degrading the exiting nascent RNA transcript via endonuclease activity. The integrator complex is also involved in the 3'-end processing of the U7 snRNA, and also the spliceosomal snRNAs U1, U2, U4 and U5. Within the integrator complex, IntS11 constitutes the RNA endonuclease subunit that degrades exiting nascent RNA transcripts. This chain is Integrator complex subunit 11, found in Drosophila melanogaster (Fruit fly).